The primary structure comprises 355 residues: UDP-N-acetylglucosamine--N-acetylmuramyl-(pentapeptide) pyrophosphoryl-undecaprenol N-acetylglucosamine transferase (355 aa).

UDP-N-acetyl-alpha-D-glucosamine contacts are provided by residues 15 to 17 (TGG), N127, R163, S191, I244, 263 to 268 (ALTVSE), and Q288.

It belongs to the glycosyltransferase 28 family. MurG subfamily.

It is found in the cell inner membrane. The catalysed reaction is di-trans,octa-cis-undecaprenyl diphospho-N-acetyl-alpha-D-muramoyl-L-alanyl-D-glutamyl-meso-2,6-diaminopimeloyl-D-alanyl-D-alanine + UDP-N-acetyl-alpha-D-glucosamine = di-trans,octa-cis-undecaprenyl diphospho-[N-acetyl-alpha-D-glucosaminyl-(1-&gt;4)]-N-acetyl-alpha-D-muramoyl-L-alanyl-D-glutamyl-meso-2,6-diaminopimeloyl-D-alanyl-D-alanine + UDP + H(+). Its pathway is cell wall biogenesis; peptidoglycan biosynthesis. Its function is as follows. Cell wall formation. Catalyzes the transfer of a GlcNAc subunit on undecaprenyl-pyrophosphoryl-MurNAc-pentapeptide (lipid intermediate I) to form undecaprenyl-pyrophosphoryl-MurNAc-(pentapeptide)GlcNAc (lipid intermediate II). This chain is UDP-N-acetylglucosamine--N-acetylmuramyl-(pentapeptide) pyrophosphoryl-undecaprenol N-acetylglucosamine transferase, found in Salmonella newport (strain SL254).